We begin with the raw amino-acid sequence, 399 residues long: Insertion element IS116 uncharacterized 44.8 kDa protein (399 aa).

It belongs to the transposase IS1111A/IS1328/IS1533 family.

The chain is Insertion element IS116 uncharacterized 44.8 kDa protein from Streptomyces clavuligerus.